A 599-amino-acid polypeptide reads, in one-letter code: 2-succinyl-5-enolpyruvyl-6-hydroxy-3-cyclohexene-1-carboxylate synthase (599 aa).

Residues 1–21 (MTSENPLDPNNAYAAADDAPL) are compositionally biased toward low complexity. Residues 1–35 (MTSENPLDPNNAYAAADDAPLSEGDPTGAPADSGS) form a disordered region.

The protein belongs to the TPP enzyme family. MenD subfamily. As to quaternary structure, homodimer. Mg(2+) is required as a cofactor. Mn(2+) serves as cofactor. It depends on thiamine diphosphate as a cofactor.

It catalyses the reaction isochorismate + 2-oxoglutarate + H(+) = 5-enolpyruvoyl-6-hydroxy-2-succinyl-cyclohex-3-ene-1-carboxylate + CO2. It participates in quinol/quinone metabolism; 1,4-dihydroxy-2-naphthoate biosynthesis; 1,4-dihydroxy-2-naphthoate from chorismate: step 2/7. The protein operates within quinol/quinone metabolism; menaquinone biosynthesis. Functionally, catalyzes the thiamine diphosphate-dependent decarboxylation of 2-oxoglutarate and the subsequent addition of the resulting succinic semialdehyde-thiamine pyrophosphate anion to isochorismate to yield 2-succinyl-5-enolpyruvyl-6-hydroxy-3-cyclohexene-1-carboxylate (SEPHCHC). This chain is 2-succinyl-5-enolpyruvyl-6-hydroxy-3-cyclohexene-1-carboxylate synthase, found in Arthrobacter sp. (strain FB24).